A 304-amino-acid polypeptide reads, in one-letter code: N-acetylmuramic acid 6-phosphate etherase (304 aa).

One can recognise an SIS domain in the interval 62-225 (IVTAFRQGGR…TTASMILMGK (164 aa)). The active-site Proton donor is the Glu90. Glu121 is an active-site residue.

The protein belongs to the GCKR-like family. MurNAc-6-P etherase subfamily. As to quaternary structure, homodimer.

It catalyses the reaction N-acetyl-D-muramate 6-phosphate + H2O = N-acetyl-D-glucosamine 6-phosphate + (R)-lactate. The protein operates within amino-sugar metabolism; 1,6-anhydro-N-acetylmuramate degradation. It participates in amino-sugar metabolism; N-acetylmuramate degradation. Its pathway is cell wall biogenesis; peptidoglycan recycling. Its function is as follows. Specifically catalyzes the cleavage of the D-lactyl ether substituent of MurNAc 6-phosphate, producing GlcNAc 6-phosphate and D-lactate. Together with AnmK, is also required for the utilization of anhydro-N-acetylmuramic acid (anhMurNAc) either imported from the medium or derived from its own cell wall murein, and thus plays a role in cell wall recycling. This chain is N-acetylmuramic acid 6-phosphate etherase, found in Actinobacillus succinogenes (strain ATCC 55618 / DSM 22257 / CCUG 43843 / 130Z).